A 206-amino-acid chain; its full sequence is Halorhodopsin (206 aa).

Residues 1 to 15 (IALAGLSILLFVYMG) form a helical membrane-spanning segment. Residues 16–21 (RNVEDP) are Cytoplasmic-facing. Residues 22-45 (RAQLIFVATLMVPLVSISSYTGLV) form a helical membrane-spanning segment. Topologically, residues 46–75 (SGLTVGFLEMPAGHALAGMGAGPEGGVFTP) are extracellular. The chain crosses the membrane as a helical span at residues 76 to 97 (WGRYLTWAFSTPMILIALGLLA). The Cytoplasmic portion of the chain corresponds to 98 to 100 (GSN). Residues 101-124 (MSKLFTAVVADVGMCITGLAAALT) form a helical membrane-spanning segment. Residues 125 to 127 (TSS) are Extracellular-facing. Residues 128–150 (YLLRWVWYGISCAFFVVVLYILL) form a helical membrane-spanning segment. Residues 151–162 (AEWAKDAEVAGT) lie on the Cytoplasmic side of the membrane. A helical membrane pass occupies residues 163–186 (ADIFNTLKVLTVVLWLGYPIFWAL). Over 187-195 (GAEGLAVLD) the chain is Extracellular. The helical transmembrane segment at 196 to 206 (IAITSWAYSGM) threads the bilayer.

This sequence belongs to the archaeal/bacterial/fungal opsin family.

It localises to the cell membrane. Light-driven chloride pump. This chain is Halorhodopsin (hop), found in Halobacterium halobium (strain mex).